Consider the following 418-residue polypeptide: Serine hydroxymethyltransferase (418 aa).

Residues Leu121 and 125–127 (GHL) contribute to the (6S)-5,6,7,8-tetrahydrofolate site. Lys230 carries the post-translational modification N6-(pyridoxal phosphate)lysine. Residues Glu246 and 355 to 357 (SPF) contribute to the (6S)-5,6,7,8-tetrahydrofolate site.

Belongs to the SHMT family. As to quaternary structure, homodimer. Requires pyridoxal 5'-phosphate as cofactor.

Its subcellular location is the cytoplasm. The enzyme catalyses (6R)-5,10-methylene-5,6,7,8-tetrahydrofolate + glycine + H2O = (6S)-5,6,7,8-tetrahydrofolate + L-serine. It participates in one-carbon metabolism; tetrahydrofolate interconversion. The protein operates within amino-acid biosynthesis; glycine biosynthesis; glycine from L-serine: step 1/1. Catalyzes the reversible interconversion of serine and glycine with tetrahydrofolate (THF) serving as the one-carbon carrier. This reaction serves as the major source of one-carbon groups required for the biosynthesis of purines, thymidylate, methionine, and other important biomolecules. Also exhibits THF-independent aldolase activity toward beta-hydroxyamino acids, producing glycine and aldehydes, via a retro-aldol mechanism. In Streptococcus pneumoniae serotype 4 (strain ATCC BAA-334 / TIGR4), this protein is Serine hydroxymethyltransferase.